An 839-amino-acid polypeptide reads, in one-letter code: DNA-directed RNA polymerase YonO (839 aa).

Mg(2+)-binding residues include D535, D537, and D539.

It belongs to the YRH RNA polymerase family. Requires a divalent metal cation as cofactor.

The enzyme catalyses RNA(n) + a ribonucleoside 5'-triphosphate = RNA(n+1) + diphosphate. A single subunit DNA-dependent RNA polymerase (RNAP) that catalyzes the transcription of DNA into RNA using the four ribonucleoside triphosphates (rNTPs) as substrates. The enzyme is more highly processive than the multisubunit RNAP from E.coli but is considerably more error-prone. It has no detectable proof-reading function but can perform pyrophosphorolysis. Probably transcribes the late genes of the SPbeta phage starting from yonK. This is DNA-directed RNA polymerase YonO (yonO) from Bacillus pumilus (Bacillus mesentericus).